Here is an 83-residue protein sequence, read N- to C-terminus: Hainantoxin-III 12 (83 aa).

The signal sequence occupies residues 1 to 21 (MKASMFLALAGLVLLFVVGYA). Residues 22 to 48 (SGSEEKEFPRELLSKIFAVDDFKGEER) constitute a propeptide that is removed on maturation. Intrachain disulfides connect C50/C65, C57/C70, and C64/C77. Leucine amide is present on L81.

It belongs to the neurotoxin 10 (Hwtx-1) family. 15 (Hntx-3) subfamily. In terms of assembly, monomer. As to expression, expressed by the venom gland.

It is found in the secreted. In terms of biological role, selective antagonist of neuronal tetrodotoxin (TTX)-sensitive voltage-gated sodium channels (IC(50)=1270 nM on Nav1.1/SCN1A, 270 nM on Nav1.2/SCN2A, 491 nM on Nav1.3/SCN3A and 232 nM on Nav1.7/SCN9A). This toxin suppress Nav1.7 current amplitude without significantly altering the activation, inactivation, and repriming kinetics. Short extreme depolarizations partially activate the toxin-bound channel, indicating voltage-dependent inhibition of this toxin. This toxin increases the deactivation of the Nav1.7 current after extreme depolarizations. The toxin-Nav1.7 complex is gradually dissociated upon prolonged strong depolarizations in a voltage-dependent manner, and the unbound toxin rebinds to Nav1.7 after a long repolarization. Moreover, analysis of chimeric channels showed that the DIIS3-S4 linker is critical for toxin binding to Nav1.7. These data are consistent with this toxin interacting with Nav1.7 site 4 and trapping the domain II voltage sensor in the closed state. In Cyriopagopus hainanus (Chinese bird spider), this protein is Hainantoxin-III 12.